The chain runs to 602 residues: Elongation factor 4 (602 aa).

Residues 7–188 (ENIRNFSIIA…AIIDLVPPPK (182 aa)) enclose the tr-type G domain. Residues 19-24 (DHGKST) and 135-138 (NKID) each bind GTP.

It belongs to the TRAFAC class translation factor GTPase superfamily. Classic translation factor GTPase family. LepA subfamily.

The protein resides in the cell inner membrane. It catalyses the reaction GTP + H2O = GDP + phosphate + H(+). Functionally, required for accurate and efficient protein synthesis under certain stress conditions. May act as a fidelity factor of the translation reaction, by catalyzing a one-codon backward translocation of tRNAs on improperly translocated ribosomes. Back-translocation proceeds from a post-translocation (POST) complex to a pre-translocation (PRE) complex, thus giving elongation factor G a second chance to translocate the tRNAs correctly. Binds to ribosomes in a GTP-dependent manner. This chain is Elongation factor 4, found in Chlamydia pneumoniae (Chlamydophila pneumoniae).